The following is a 953-amino-acid chain: Pyruvate, phosphate dikinase, chloroplastic (953 aa).

Residues 1 to 77 (MMSSLSVEGM…VLNPVSPPVT (77 aa)) constitute a chloroplast transit peptide. The segment at 55–74 (PELRSSGLTPPRAVLNPVSP) is disordered. A Phosphothreonine; by PDRP1 modification is found at threonine 533. Residue histidine 535 is the Tele-phosphohistidine intermediate of the active site. Residues arginine 641, arginine 698, glutamate 827, glycine 848, threonine 849, asparagine 850, and aspartate 851 each contribute to the substrate site. Residue glutamate 827 participates in Mg(2+) binding. Aspartate 851 contacts Mg(2+). Cysteine 913 functions as the Proton donor in the catalytic mechanism.

The protein belongs to the PEP-utilizing enzyme family. Homotetramer. Mg(2+) serves as cofactor. Post-translationally, phosphorylation of Thr-533 in the dark inactivates the enzyme. Dephosphorylation upon light stimulation reactivates the enzyme. In terms of tissue distribution, isoform 1 mainly localized in mesophyll cells and only a low level is found in bundle sheath cells. Isoform 2 is expressed in roots and stems.

The protein localises to the plastid. It localises to the chloroplast. Its subcellular location is the cytoplasm. It carries out the reaction pyruvate + phosphate + ATP = phosphoenolpyruvate + AMP + diphosphate + H(+). Its pathway is photosynthesis; C4 acid pathway. Its activity is regulated as follows. Activated by light-induced dephosphorylation. Inhibited by dark-induced phosphorylation. Both reactions are catalyzed by PDRP1. Formation of phosphoenolpyruvate, which is the primary acceptor of CO(2) in C4 and some Crassulacean acid metabolism plants. In Flaveria trinervia (Clustered yellowtops), this protein is Pyruvate, phosphate dikinase, chloroplastic (PPDK).